A 477-amino-acid polypeptide reads, in one-letter code: Probable cytosolic Fe-S cluster assembly factor GK14772 (477 aa).

Positions 23, 69, 72, 75, 188, 244, 396, and 400 each coordinate [4Fe-4S] cluster.

The protein belongs to the NARF family.

Functionally, component of the cytosolic iron-sulfur (Fe/S) protein assembly machinery. Required for maturation of extramitochondrial Fe/S proteins. The protein is Probable cytosolic Fe-S cluster assembly factor GK14772 of Drosophila willistoni (Fruit fly).